Consider the following 580-residue polypeptide: Serine/threonine-protein kinase srk1 (580 aa).

Residues 51–61 (VADSTQNPTSK) show a composition bias toward polar residues. Positions 51–91 (VADSTQNPTSKPKSRHAHFHETVHENPSEYSRSKCKQPTNE) are disordered. A Protein kinase domain is found at 124-421 (YTLLQKMGDG…IHQFLAHPWI (298 aa)). Residues 130–138 (MGDGAFSNV) and Lys153 each bind ATP. Asp257 functions as the Proton acceptor in the catalytic mechanism. The disordered stretch occupies residues 530 to 580 (NLSGENDPSLASRQPAQSQQQSSQRSRNKFKGFQLNLSKATLYNRRHRQKV). The segment covering 537-554 (PSLASRQPAQSQQQSSQR) has biased composition (low complexity).

It belongs to the protein kinase superfamily. CAMK Ser/Thr protein kinase family. CaMK subfamily. Mg(2+) is required as a cofactor. Post-translationally, phosphorylated by sty1.

It is found in the cytoplasm. It localises to the nucleus. The protein resides in the nucleolus. The protein localises to the spore core. It catalyses the reaction L-seryl-[protein] + ATP = O-phospho-L-seryl-[protein] + ADP + H(+). The enzyme catalyses L-threonyl-[protein] + ATP = O-phospho-L-threonyl-[protein] + ADP + H(+). Delays the mitotic G2/M transition by promoting nuclear exclusion of cdc25. During osmotic stress, inhibits the G2/M transition in a sty1 stress-activated MAPK pathway-dependent manner. The sequence is that of Serine/threonine-protein kinase srk1 from Schizosaccharomyces pombe (strain 972 / ATCC 24843) (Fission yeast).